Reading from the N-terminus, the 248-residue chain is Amphiregulin (248 aa).

The signal sequence occupies residues 1-26; it reads MRTPLLPLARSVLLLLVLGSGHYAAA. Positions 27–99 are excised as a propeptide; that stretch reads LELNDPSSGK…IIDDSVRVEQ (73 aa). Disordered stretches follow at residues 29 to 48, 57 to 77, and 100 to 136; these read LNDP…SAGG, VSTI…YDYS, and VIKP…KKKK. Residues 58–70 show a composition bias toward polar residues; sequence STISEMPSGSELS. Basic and acidic residues predominate over residues 100–116; that stretch reads VIKPKKNKTEGEKSTEK. Asparagine 106 carries an N-linked (GlcNAc...) asparagine glycan. The segment covering 117–136 has biased composition (basic residues); the sequence is PKRKKKGGKNGKGRRNKKKK. Residues 135–175 form the EGF-like domain; it reads KKNPCTAKFQNFCIHGECRYIENLEVVTCNCHQDYFGERCG. Cystine bridges form between cysteine 139–cysteine 152, cysteine 147–cysteine 163, and cysteine 165–cysteine 174. The helical transmembrane segment at 192–215 threads the bilayer; sequence IAVVAVTIFVSAIILAAIGIGIVI. Residue asparagine 241 is glycosylated (N-linked (GlcNAc...) asparagine).

It belongs to the amphiregulin family. The immature precursor interacts with CNIH.

It localises to the membrane. Its function is as follows. Ligand of the EGF receptor/EGFR. Autocrine growth factor as well as a mitogen for a broad range of target cells including astrocytes, Schwann cells and fibroblasts. This is Amphiregulin (Areg) from Mus musculus (Mouse).